Here is a 290-residue protein sequence, read N- to C-terminus: 33 kDa chaperonin (290 aa).

2 disulfide bridges follow: C235-C237 and C268-C271.

Belongs to the HSP33 family. Post-translationally, under oxidizing conditions two disulfide bonds are formed involving the reactive cysteines. Under reducing conditions zinc is bound to the reactive cysteines and the protein is inactive.

The protein localises to the cytoplasm. Redox regulated molecular chaperone. Protects both thermally unfolding and oxidatively damaged proteins from irreversible aggregation. Plays an important role in the bacterial defense system toward oxidative stress. This Streptococcus pyogenes serotype M3 (strain ATCC BAA-595 / MGAS315) protein is 33 kDa chaperonin.